The primary structure comprises 215 residues: Pyrrolidone-carboxylate peptidase (215 aa).

Residues Glu80, Cys143, and His167 contribute to the active site.

It belongs to the peptidase C15 family. In terms of assembly, homotetramer.

The protein localises to the cytoplasm. The enzyme catalyses Release of an N-terminal pyroglutamyl group from a polypeptide, the second amino acid generally not being Pro.. Removes 5-oxoproline from various penultimate amino acid residues except L-proline. This chain is Pyrrolidone-carboxylate peptidase, found in Bacillus thuringiensis subsp. konkukian (strain 97-27).